The sequence spans 429 residues: Enolase (429 aa).

Gln162 serves as a coordination point for (2R)-2-phosphoglycerate. The active-site Proton donor is Glu204. Residues Asp241, Glu282, and Asp309 each contribute to the Mg(2+) site. Lys334, Arg363, Ser364, and Lys385 together coordinate (2R)-2-phosphoglycerate. Catalysis depends on Lys334, which acts as the Proton acceptor.

This sequence belongs to the enolase family. Requires Mg(2+) as cofactor.

It localises to the cytoplasm. Its subcellular location is the secreted. The protein resides in the cell surface. The catalysed reaction is (2R)-2-phosphoglycerate = phosphoenolpyruvate + H2O. It participates in carbohydrate degradation; glycolysis; pyruvate from D-glyceraldehyde 3-phosphate: step 4/5. Its function is as follows. Catalyzes the reversible conversion of 2-phosphoglycerate (2-PG) into phosphoenolpyruvate (PEP). It is essential for the degradation of carbohydrates via glycolysis. This Acidothermus cellulolyticus (strain ATCC 43068 / DSM 8971 / 11B) protein is Enolase.